Reading from the N-terminus, the 203-residue chain is Small ribosomal subunit protein uS4 (203 aa).

A disordered region spans residues 15–46 (LGENIWGRPKSSVNRRSYGPGQHGQRRKSKVS). In terms of domain architecture, S4 RNA-binding spans 94-154 (QRLDMVVYRA…KKAKEMALIA (61 aa)).

Belongs to the universal ribosomal protein uS4 family. As to quaternary structure, part of the 30S ribosomal subunit. Contacts protein S5. The interaction surface between S4 and S5 is involved in control of translational fidelity.

Its function is as follows. One of the primary rRNA binding proteins, it binds directly to 16S rRNA where it nucleates assembly of the body of the 30S subunit. In terms of biological role, with S5 and S12 plays an important role in translational accuracy. This Novosphingobium aromaticivorans (strain ATCC 700278 / DSM 12444 / CCUG 56034 / CIP 105152 / NBRC 16084 / F199) protein is Small ribosomal subunit protein uS4.